Consider the following 483-residue polypeptide: Protein hedgehog (483 aa).

An N-terminal signal peptide occupies residues 1 to 19 (MDNQTVAAIWSCASATCLS). A propeptide spanning residues 20–92 (LDAKRHSVET…LALNFRHAHS (73 aa)) is cleaved from the precursor. A disordered region spans residues 28 to 57 (ETNTNDRQAPPGLSNSNNNNNNNKSTAVDA). Residues 41 to 50 (SNSNNNNNNN) show a composition bias toward low complexity. The N-palmitoyl cysteine moiety is linked to residue cysteine 93. Ca(2+) is bound by residues glutamate 157, glutamate 158, aspartate 163, threonine 193, glutamate 194, aspartate 197, and aspartate 199. The Cholesterol glycine ester moiety is linked to residue glycine 266.

It belongs to the hedgehog family. In terms of assembly, interacts with shf. Post-translationally, the C-terminal part of the hedgehog protein precursor displays an autoproteolysis activity that results in the cleavage of the full-length protein into two parts (N-product and C-product). In addition, the C-terminal part displays a cholesterol transferase activity that results by the covalent attachment of a cholesterol moiety to the C-terminal of the newly generated N-product. The N-product is the active species in both local and long-range signaling, whereas the C-product has no signaling activity. In terms of processing, cholesterylation is required for N-product targeting to lipid rafts and multimerization. N-palmitoylation by Rasp of the hedgehog N-product, within the secretory pathway, is required for the embryonic and larval patterning activities of the hedgehog signal.

It localises to the nucleus. The protein localises to the cytoplasm. Its subcellular location is the cell membrane. It carries out the reaction glycyl-L-cysteinyl-[protein] + cholesterol + H(+) = [protein]-C-terminal glycyl cholesterol ester + N-terminal L-cysteinyl-[protein]. The C-terminal part of the hedgehog protein precursor displays an autoproteolysis activity that results in the cleavage of the full-length protein into two parts (N-product and C-product). In addition, the C-terminal part displays a cholesterol transferase activity that results by the covalent attachment of a cholesterol moiety to the C-terminal of the newly generated N-product. Once cleaved, the C-product has no signaling activity and diffuses from the cell. In terms of biological role, the dually lipidated hedgehog protein N-product is a morphogen which is essential for a variety of patterning events during development. Establishes the anterior-posterior axis of the embryonic segments and patterns the larval imaginal disks. Binds to the patched (ptc) receptor, which functions in association with smoothened (smo), to activate the transcription of target genes wingless (wg), decapentaplegic (dpp) and ptc. In the absence of hh, ptc represses the constitutive signaling activity of smo through fused (fu). Essential component of a signaling pathway which regulates the Duox-dependent gut immune response to bacterial uracil; required to activate Cad99C-dependent endosome formation, norpA-dependent Ca2+ mobilization and p38 MAPK, which are essential steps in the Duox-dependent production of reactive oxygen species (ROS) in response to intestinal bacterial infection. During photoreceptor differentiation, it up-regulates transcription of Ubr3, which in turn promotes the hh-signaling pathway by mediating the ubiquitination and degradation of cos. The polypeptide is Protein hedgehog (Drosophila virilis (Fruit fly)).